We begin with the raw amino-acid sequence, 464 residues long: 3-isopropylmalate dehydratase large subunit (464 aa).

[4Fe-4S] cluster contacts are provided by Cys-337, Cys-397, and Cys-400.

Belongs to the aconitase/IPM isomerase family. LeuC type 1 subfamily. As to quaternary structure, heterodimer of LeuC and LeuD. It depends on [4Fe-4S] cluster as a cofactor.

The catalysed reaction is (2R,3S)-3-isopropylmalate = (2S)-2-isopropylmalate. It functions in the pathway amino-acid biosynthesis; L-leucine biosynthesis; L-leucine from 3-methyl-2-oxobutanoate: step 2/4. Its function is as follows. Catalyzes the isomerization between 2-isopropylmalate and 3-isopropylmalate, via the formation of 2-isopropylmaleate. This Bacillus thuringiensis subsp. konkukian (strain 97-27) protein is 3-isopropylmalate dehydratase large subunit.